We begin with the raw amino-acid sequence, 132 residues long: Tyrosine phosphatase-like protein N2 (132 aa).

Positions 1–132 (MQGPMKNTVA…DILGRFQRVF (132 aa)) constitute a Tyrosine-protein phosphatase domain.

It belongs to the protein-tyrosine phosphatase family.

The protein is Tyrosine phosphatase-like protein N2 (N4) of Microplitis demolitor (Parasitoid wasp).